The sequence spans 251 residues: Triosephosphate isomerase (251 aa).

Asn9–Lys11 lines the substrate pocket. His94 serves as the catalytic Electrophile. Catalysis depends on Glu166, which acts as the Proton acceptor. Substrate contacts are provided by residues Gly172, Ser211, and Gly232–Gly233.

Belongs to the triosephosphate isomerase family. In terms of assembly, homodimer.

Its subcellular location is the cytoplasm. The catalysed reaction is D-glyceraldehyde 3-phosphate = dihydroxyacetone phosphate. The protein operates within carbohydrate biosynthesis; gluconeogenesis. Its pathway is carbohydrate degradation; glycolysis; D-glyceraldehyde 3-phosphate from glycerone phosphate: step 1/1. Functionally, involved in the gluconeogenesis. Catalyzes stereospecifically the conversion of dihydroxyacetone phosphate (DHAP) to D-glyceraldehyde-3-phosphate (G3P). The chain is Triosephosphate isomerase from Xanthomonas axonopodis pv. citri (strain 306).